The sequence spans 188 residues: Pyridoxal 5'-phosphate synthase subunit PdxT (188 aa).

Residue 46–48 (GES) participates in L-glutamine binding. Cysteine 78 functions as the Nucleophile in the catalytic mechanism. L-glutamine is bound by residues arginine 105 and 134–135 (IR). Residues histidine 170 and glutamate 172 each act as charge relay system in the active site.

It belongs to the glutaminase PdxT/SNO family. In terms of assembly, in the presence of PdxS, forms a dodecamer of heterodimers. Only shows activity in the heterodimer.

The catalysed reaction is aldehydo-D-ribose 5-phosphate + D-glyceraldehyde 3-phosphate + L-glutamine = pyridoxal 5'-phosphate + L-glutamate + phosphate + 3 H2O + H(+). It carries out the reaction L-glutamine + H2O = L-glutamate + NH4(+). The protein operates within cofactor biosynthesis; pyridoxal 5'-phosphate biosynthesis. In terms of biological role, catalyzes the hydrolysis of glutamine to glutamate and ammonia as part of the biosynthesis of pyridoxal 5'-phosphate. The resulting ammonia molecule is channeled to the active site of PdxS. This chain is Pyridoxal 5'-phosphate synthase subunit PdxT, found in Desulforamulus reducens (strain ATCC BAA-1160 / DSM 100696 / MI-1) (Desulfotomaculum reducens).